The chain runs to 595 residues: Putative capsid protein V20 (595 aa).

It is found in the virion. Functionally, may self assemble to form an icosahedral capsid. Most abundant protein in the virion. The polypeptide is Putative capsid protein V20 (Sputnik virophage).